The sequence spans 315 residues: uncharacterized protein (315 aa).

A compositionally biased stretch (polar residues) spans 1–23; the sequence is MSNTDALNTANTQITENVDTSSM. Residues 1 to 31 are disordered; the sequence is MSNTDALNTANTQITENVDTSSMKVEKTHDS.

This is an uncharacterized protein from Acanthamoeba polyphaga mimivirus (APMV).